The sequence spans 445 residues: Alpha-1,3-mannosyl-glycoprotein 2-beta-N-acetylglucosaminyltransferase (445 aa).

At 1–6 (MLKKQS) the chain is on the cytoplasmic side. Residues 7-29 (AGLVLWGAILFVAWNALLLLFFW) traverse the membrane as a helical; Signal-anchor for type II membrane protein segment. Topologically, residues 30–445 (TRPAPGRPPS…TWEGYDPSWN (416 aa)) are lumenal. Cys-113 and Cys-143 are disulfide-bonded. Substrate-binding residues include Arg-115, Asp-142, His-188, and Asp-210. Asp-211 is a binding site for Mn(2+). The cysteines at positions 237 and 303 are disulfide-linked. Catalysis depends on Asp-289, which acts as the Proton acceptor. Ser-320 contributes to the substrate binding site.

The protein belongs to the glycosyltransferase 13 family. In terms of assembly, interacts with MGAT4D. Interacts with BRI3 (isoforms 1 and 2); the interaction with isoform 2 is weaker than with isoform 1. Requires Mn(2+) as cofactor.

The protein resides in the golgi apparatus membrane. It localises to the cytoplasm. It is found in the perinuclear region. The catalysed reaction is N(4)-(alpha-D-Man-(1-&gt;3)-[alpha-D-Man-(1-&gt;3)-[alpha-D-Man-(1-&gt;6)]-alpha-D-Man-(1-&gt;6)]-beta-D-Man-(1-&gt;4)-beta-D-GlcNAc-(1-&gt;4)-beta-D-GlcNAc)-L-asparaginyl-[protein] (N-glucan mannose isomer 5A1,2) + UDP-N-acetyl-alpha-D-glucosamine = N(4)-{beta-D-GlcNAc-(1-&gt;2)-alpha-D-Man-(1-&gt;3)-[alpha-D-Man-(1-&gt;3)-[alpha-D-Man-(1-&gt;6)]-alpha-D-Man-(1-&gt;6)]-beta-D-Man-(1-&gt;4)-beta-D-GlcNAc-(1-&gt;4)-beta-D-GlcNAc}-L-asparaginyl-[protein] + UDP + H(+). It functions in the pathway protein modification; protein glycosylation. Functionally, initiates complex N-linked carbohydrate formation. Essential for the conversion of high-mannose to hybrid and complex N-glycans. The polypeptide is Alpha-1,3-mannosyl-glycoprotein 2-beta-N-acetylglucosaminyltransferase (MGAT1) (Homo sapiens (Human)).